The chain runs to 89 residues: Phosphocarrier protein HPr (89 aa).

An HPr domain is found at methionine 1–glutamine 89. The Pros-phosphohistidine intermediate role is filled by histidine 14. Serine 47 carries the phosphoserine; by HPrK/P modification.

Belongs to the HPr family.

The protein resides in the cytoplasm. Its activity is regulated as follows. Phosphorylation on Ser-47 inhibits the phosphoryl transfer from enzyme I to HPr. Its function is as follows. General (non sugar-specific) component of the phosphoenolpyruvate-dependent sugar phosphotransferase system (sugar PTS). This major carbohydrate active-transport system catalyzes the phosphorylation of incoming sugar substrates concomitantly with their translocation across the cell membrane. The phosphoryl group from phosphoenolpyruvate (PEP) is transferred to the phosphoryl carrier protein HPr by enzyme I. Phospho-HPr then transfers it to the PTS EIIA domain. Is involved in fructose transport. The chain is Phosphocarrier protein HPr (ptsH1) from Haloferax volcanii (strain ATCC 29605 / DSM 3757 / JCM 8879 / NBRC 14742 / NCIMB 2012 / VKM B-1768 / DS2) (Halobacterium volcanii).